A 611-amino-acid chain; its full sequence is Dihydroxy-acid dehydratase (611 aa).

Residue D81 coordinates Mg(2+). C122 is a binding site for [2Fe-2S] cluster. The Mg(2+) site is built by D123 and K124. An N6-carboxylysine modification is found at K124. C195 contributes to the [2Fe-2S] cluster binding site. A Mg(2+)-binding site is contributed by E491. S517 serves as the catalytic Proton acceptor.

The protein belongs to the IlvD/Edd family. Homodimer. The cofactor is [2Fe-2S] cluster. Requires Mg(2+) as cofactor.

The enzyme catalyses (2R)-2,3-dihydroxy-3-methylbutanoate = 3-methyl-2-oxobutanoate + H2O. It carries out the reaction (2R,3R)-2,3-dihydroxy-3-methylpentanoate = (S)-3-methyl-2-oxopentanoate + H2O. Its pathway is amino-acid biosynthesis; L-isoleucine biosynthesis; L-isoleucine from 2-oxobutanoate: step 3/4. It participates in amino-acid biosynthesis; L-valine biosynthesis; L-valine from pyruvate: step 3/4. Functionally, functions in the biosynthesis of branched-chain amino acids. Catalyzes the dehydration of (2R,3R)-2,3-dihydroxy-3-methylpentanoate (2,3-dihydroxy-3-methylvalerate) into 2-oxo-3-methylpentanoate (2-oxo-3-methylvalerate) and of (2R)-2,3-dihydroxy-3-methylbutanoate (2,3-dihydroxyisovalerate) into 2-oxo-3-methylbutanoate (2-oxoisovalerate), the penultimate precursor to L-isoleucine and L-valine, respectively. This is Dihydroxy-acid dehydratase from Glaesserella parasuis serovar 5 (strain SH0165) (Haemophilus parasuis).